Consider the following 501-residue polypeptide: Aldehyde dehydrogenase family 2 member C4 (501 aa).

Gly245 to Gly250 contributes to the NAD(+) binding site. The active-site Proton acceptor is the Glu268. The active-site Nucleophile is Cys302.

It belongs to the aldehyde dehydrogenase family. In terms of assembly, homotetramer.

The protein localises to the cytoplasm. The protein resides in the cytosol. The enzyme catalyses an aldehyde + NAD(+) + H2O = a carboxylate + NADH + 2 H(+). In terms of biological role, involved in ferulic acid and sinapic acid biosynthesis by oxidation of conyferylaldehyde and sinapaldehyde, respectively. Can oxidize L-lactaldehyde. Possesses activity on acetaldehyde and glycolaldehyde in vitro. The sequence is that of Aldehyde dehydrogenase family 2 member C4 (ALDH2C4) from Arabidopsis thaliana (Mouse-ear cress).